Here is a 413-residue protein sequence, read N- to C-terminus: Multifunctional CCA protein (413 aa).

ATP-binding residues include Gly8 and Arg11. Gly8 and Arg11 together coordinate CTP. Residues Asp21 and Asp23 each contribute to the Mg(2+) site. Residues Arg91, Arg143, and Arg146 each contribute to the ATP site. CTP-binding residues include Arg91, Arg143, and Arg146. The 102-residue stretch at 232–333 (TGVHVMMVVD…VRLFERSDAL (102 aa)) folds into the HD domain.

This sequence belongs to the tRNA nucleotidyltransferase/poly(A) polymerase family. Bacterial CCA-adding enzyme type 1 subfamily. In terms of assembly, monomer. Can also form homodimers and oligomers. Requires Mg(2+) as cofactor. It depends on Ni(2+) as a cofactor.

It catalyses the reaction a tRNA precursor + 2 CTP + ATP = a tRNA with a 3' CCA end + 3 diphosphate. It carries out the reaction a tRNA with a 3' CCA end + 2 CTP + ATP = a tRNA with a 3' CCACCA end + 3 diphosphate. In terms of biological role, catalyzes the addition and repair of the essential 3'-terminal CCA sequence in tRNAs without using a nucleic acid template. Adds these three nucleotides in the order of C, C, and A to the tRNA nucleotide-73, using CTP and ATP as substrates and producing inorganic pyrophosphate. tRNA 3'-terminal CCA addition is required both for tRNA processing and repair. Also involved in tRNA surveillance by mediating tandem CCA addition to generate a CCACCA at the 3' terminus of unstable tRNAs. While stable tRNAs receive only 3'-terminal CCA, unstable tRNAs are marked with CCACCA and rapidly degraded. This chain is Multifunctional CCA protein, found in Burkholderia lata (strain ATCC 17760 / DSM 23089 / LMG 22485 / NCIMB 9086 / R18194 / 383).